The chain runs to 143 residues: Large-conductance mechanosensitive channel (143 aa).

The next 3 helical transmembrane spans lie at 10 to 30 (FAIK…GAFG), 40 to 60 (IIMP…QKFI), and 86 to 106 (GNFL…FLMV).

The protein belongs to the MscL family. In terms of assembly, homopentamer.

Its subcellular location is the cell inner membrane. Its function is as follows. Channel that opens in response to stretch forces in the membrane lipid bilayer. May participate in the regulation of osmotic pressure changes within the cell. The polypeptide is Large-conductance mechanosensitive channel (Acinetobacter baumannii (strain ATCC 17978 / DSM 105126 / CIP 53.77 / LMG 1025 / NCDC KC755 / 5377)).